A 95-amino-acid chain; its full sequence is MPKLAVVLLVLLILPLSYFDAAGGQAVQGDWRGNRLARDLQRGGRDDESECIINTRDSPWGRCCRTRMCGSMCCPRNGCTCVYHWRRGHGCSCPG.

The first 24 residues, 1–24 (MPKLAVVLLVLLILPLSYFDAAGG), serve as a signal peptide directing secretion. A propeptide spanning residues 25–45 (QAVQGDWRGNRLARDLQRGGR) is cleaved from the precursor. A 4-carboxyglutamate mark is found at Glu-48 and Glu-50. Pro-59 is modified (4-hydroxyproline; partial). Disulfide bonds link Cys-64-Cys-73, Cys-69-Cys-81, Cys-74-Cys-91, and Cys-79-Cys-93. A 4-hydroxyproline; partial modification is found at Pro-75. Pro-94 is modified (4-hydroxyproline; partial). Pro-94 carries the proline amide; in form [desGly-95]VxXXB modification.

This sequence belongs to the conotoxin D superfamily. Homodimer. Pseudo-homodimer (identical sequence, different post-translational modifications). As to expression, expressed by the venom duct.

Its subcellular location is the secreted. In terms of biological role, alpha-conotoxins act on postsynaptic membranes, they bind to the nicotinic acetylcholine receptors (nAChR) and thus inhibit them. Through its two C-terminal domains, this homodimeric protein would bind to two nAChR allosteric sites, located outside the nAChR C-loop of the principal binding face and at the adjacent binding interface in a clockwise direction. It specifically blocks mammalian neuronal nAChR of the alpha-7/CHRNA7 (IC(50)=0.4 nM), alpha-3-beta-2/CHRNA3-CHRNB2 (IC(50)=8.4 nM) and alpha-4-beta-2/CHRNA4-CHRNB2 (IC(50)=228 nM) subtypes. It inhibits alpha-7/CHRNA7, alpha-3-beta-2/CHRNA3-CHRNB2 and alpha-4-beta-2/CHRNA4-CHRNB2 nAChR subtypes more efficiently than VxXXA and VxXXC. The protein is Alpha-conotoxin VxXXB of Conus vexillum (Flag cone).